We begin with the raw amino-acid sequence, 128 residues long: Ribonuclease P protein component (128 aa).

This sequence belongs to the RnpA family. In terms of assembly, consists of a catalytic RNA component (M1 or rnpB) and a protein subunit.

It catalyses the reaction Endonucleolytic cleavage of RNA, removing 5'-extranucleotides from tRNA precursor.. RNaseP catalyzes the removal of the 5'-leader sequence from pre-tRNA to produce the mature 5'-terminus. It can also cleave other RNA substrates such as 4.5S RNA. The protein component plays an auxiliary but essential role in vivo by binding to the 5'-leader sequence and broadening the substrate specificity of the ribozyme. The sequence is that of Ribonuclease P protein component from Parasynechococcus marenigrum (strain WH8102).